Here is a 188-residue protein sequence, read N- to C-terminus: Inner kinetochore subunit cnl2 (188 aa).

Belongs to the NKP2 family. Component of the inner kinetochore constitutive centromere-associated network (CCAN) (also known as central kinetochore Sim4 complex in fission yeast), which is composed of at least cnl2, cnp3, cnp20, fta1, fta2, fta3, fta4, fta6, fta7, mal2, mhf1, mhf2, mis6, mis15, mis17, sim4 and wip1.

The protein resides in the cytoplasm. It is found in the nucleus. The protein localises to the chromosome. It localises to the centromere. Its subcellular location is the kinetochore. Functionally, component of the kinetochore, a multiprotein complex that assembles on centromeric DNA and attaches chromosomes to spindle microtubules, mediating chromosome segregation and sister chromatid segregation during meiosis and mitosis. Component of the inner kinetochore constitutive centromere-associated network (CCAN), which serves as a structural platform for outer kinetochore assembly. This is Inner kinetochore subunit cnl2 (cnl2) from Schizosaccharomyces pombe (strain 972 / ATCC 24843) (Fission yeast).